Reading from the N-terminus, the 178-residue chain is Translation initiation factor IF-3 (178 aa).

Belongs to the IF-3 family. Monomer.

The protein resides in the cytoplasm. Functionally, IF-3 binds to the 30S ribosomal subunit and shifts the equilibrium between 70S ribosomes and their 50S and 30S subunits in favor of the free subunits, thus enhancing the availability of 30S subunits on which protein synthesis initiation begins. The chain is Translation initiation factor IF-3 from Legionella pneumophila (strain Paris).